A 938-amino-acid polypeptide reads, in one-letter code: Protein SEY1 (938 aa).

Residues 1–159 (MTSQSHGAPP…QKSAKSTPGS (159 aa)) form a disordered region. Residues 1–839 (MTSQSHGAPP…KRSTIQSTTQ (839 aa)) lie on the Cytoplasmic side of the membrane. The span at 33–45 (SVSSSHSSHSPVT) shows a compositional bias: low complexity. The span at 74 to 94 (IAAPEPIAAPEPIPAPEPIAA) shows a compositional bias: pro residues. Over residues 100–118 (LKSEHKPVEREHKPVERKP) the composition is skewed to basic and acidic residues. The segment covering 146–158 (VPTSQKSAKSTPG) has biased composition (polar residues). The 232-residue stretch at 192–423 (GLDYHVVAVF…DPNYVFKPVY (232 aa)) folds into the GB1/RHD3-type G domain. 202-209 (GSQSTGKS) is a binding site for GTP. A coiled-coil region spans residues 603–630 (SYDDTLAALEQELDTLRDHKSKVEIDRL). The chain crosses the membrane as a helical span at residues 840–860 (IPLYMYGLLLLLGWNEIMAVL). The Lumenal portion of the chain corresponds to 861–863 (RSP). A helical transmembrane segment spans residues 864–884 (VYFMFLLVAAGAAYVIHTLHL). The Cytoplasmic portion of the chain corresponds to 885 to 938 (WGPLTHMTNTMIAEATDMAKAKLKQVLNEAPTGETREREAPVGSSRDDVELKDL). Residues 911 to 938 (LNEAPTGETREREAPVGSSRDDVELKDL) are disordered. Positions 918–938 (ETREREAPVGSSRDDVELKDL) are enriched in basic and acidic residues.

It belongs to the TRAFAC class dynamin-like GTPase superfamily. GB1/RHD3 GTPase family. RHD3 subfamily.

It localises to the endoplasmic reticulum membrane. Cooperates with the reticulon proteins and tubule-shaping DP1 family proteins to generate and maintain the structure of the tubular endoplasmic reticulum network. Has GTPase activity, which is required for its function in ER organization. The sequence is that of Protein SEY1 from Yarrowia lipolytica (strain CLIB 122 / E 150) (Yeast).